The following is a 336-amino-acid chain: Protein-glutamate methylesterase/protein-glutamine glutaminase 3 (336 aa).

In terms of domain architecture, Response regulatory spans 2–119 (KIAIVNDMPM…PNPREAAAPL (118 aa)). D53 carries the 4-aspartylphosphate modification. Residues 147–336 (VSRRDRLVAI…APRLMEVFTQ (190 aa)) enclose the CheB-type methylesterase domain. Catalysis depends on residues S159, H186, and D279.

This sequence belongs to the CheB family. In terms of processing, phosphorylated by CheA. Phosphorylation of the N-terminal regulatory domain activates the methylesterase activity.

It is found in the cytoplasm. The enzyme catalyses [protein]-L-glutamate 5-O-methyl ester + H2O = L-glutamyl-[protein] + methanol + H(+). It catalyses the reaction L-glutaminyl-[protein] + H2O = L-glutamyl-[protein] + NH4(+). Its function is as follows. Involved in chemotaxis. Part of a chemotaxis signal transduction system that modulates chemotaxis in response to various stimuli. Catalyzes the demethylation of specific methylglutamate residues introduced into the chemoreceptors (methyl-accepting chemotaxis proteins or MCP) by CheR. Also mediates the irreversible deamidation of specific glutamine residues to glutamic acid. In Pseudomonas syringae pv. tomato (strain ATCC BAA-871 / DC3000), this protein is Protein-glutamate methylesterase/protein-glutamine glutaminase 3.